The primary structure comprises 119 residues: C-C motif chemokine 24 (119 aa).

The signal sequence occupies residues 1 to 26; it reads MAGLATFVVSLLLVTLCAHCIDPAGS. Disulfide bonds link C33-C58 and C34-C74. N54 and N115 each carry an N-linked (GlcNAc...) asparagine glycan.

This sequence belongs to the intercrine beta (chemokine CC) family.

The protein resides in the secreted. Its function is as follows. Chemotactic for resting T-lymphocytes, and eosinophils. Has lower chemotactic activity for neutrophils but none for monocytes and activated lymphocytes. Is a strong suppressor of colony formation by a multipotential hematopoietic progenitor cell line. Binds to CCR3. The chain is C-C motif chemokine 24 from Canis lupus familiaris (Dog).